A 92-amino-acid polypeptide reads, in one-letter code: Secreted RxLR effector protein 21 (92 aa).

Positions 1-21 (MNLSTLLLTLACISQLHGGSA) are cleaved as a signal peptide. The RxLR signature appears at 30 to 33 (RQLR).

Belongs to the RxLR effector family.

The protein localises to the secreted. It localises to the host nucleus. It is found in the host cytoplasm. Functionally, secreted effector that completely suppresses the host cell death induced by cell death-inducing proteins. The polypeptide is Secreted RxLR effector protein 21 (Plasmopara viticola (Downy mildew of grapevine)).